Reading from the N-terminus, the 79-residue chain is Acyl carrier protein (79 aa).

The region spanning 2 to 77 (SEIGERVKKI…DATKFLEKNA (76 aa)) is the Carrier domain. O-(pantetheine 4'-phosphoryl)serine is present on Ser37.

Belongs to the acyl carrier protein (ACP) family. 4'-phosphopantetheine is transferred from CoA to a specific serine of apo-ACP by AcpS. This modification is essential for activity because fatty acids are bound in thioester linkage to the sulfhydryl of the prosthetic group.

It localises to the cytoplasm. The protein operates within lipid metabolism; fatty acid biosynthesis. In terms of biological role, carrier of the growing fatty acid chain in fatty acid biosynthesis. This is Acyl carrier protein from Nitrobacter winogradskyi (strain ATCC 25391 / DSM 10237 / CIP 104748 / NCIMB 11846 / Nb-255).